The following is a 168-amino-acid chain: MAEGSRIPQARALLQQCLHARLQIRPADGDVAAQWVEVQRGLVIYVCFFKGADKELLPKMVNTLLNVKLSETENGKHVSILDLPGNILIIPQATLGGRLKGRNMQYHSNSGKEEGFELYSQFVTLCEKEVAANSKCAEARVVVEHGTYGNRQVLKLDTNGPFTHLIEF.

A Gly-transPro motif, allows the protein to recognize chirality of D-amino acids motif is present at residues 160–161 (GP).

Belongs to the DTD family. As to quaternary structure, homodimer.

The protein resides in the cytoplasm. It carries out the reaction a D-aminoacyl-tRNA + H2O = a tRNA + a D-alpha-amino acid + H(+). The catalysed reaction is glycyl-tRNA(Ala) + H2O = tRNA(Ala) + glycine + H(+). It catalyses the reaction D-tyrosyl-tRNA(Tyr) + H2O = D-tyrosine + tRNA(Tyr). The enzyme catalyses L-alanyl-tRNA(Thr) + H2O = tRNA(Thr) + L-alanine + H(+). In terms of biological role, deacylates mischarged D-aminoacyl-tRNAs. Also deacylates mischarged glycyl-tRNA(Ala), protecting cells against glycine mischarging by AlaRS. Probably acts by rejecting L-amino acids from its binding site rather than specific recognition of D-amino acids. Catalyzes the hydrolysis of D-tyrosyl-tRNA(Tyr), has no activity on correctly charged L-tyrosyl-tRNA(Tyr). By recycling D-aminoacyl-tRNA to D-amino acids and free tRNA molecules, this enzyme counteracts the toxicity associated with the formation of D-aminoacyl-tRNA entities in vivo and helps enforce protein L-homochirality. In contrast to DTD1, deacylates L-Ala mischarged on tRNA(Thr)(G4.U69) by alanine-tRNA ligase AARS. Can deacylate L-Ala due to a relaxed specificity for substrate chirality caused by the trans conformation of the Gly-Pro motif in the active site. Also hydrolyzes correctly charged, achiral, glycyl-tRNA(Gly) in vitro, although in vivo EEF1A1/EF-Tu may protect cognate achiral glycyl-tRNA(Gly) from DTD2-mediated deacetylation. The protein is D-aminoacyl-tRNA deacylase 2 (DTD2) of Homo sapiens (Human).